A 93-amino-acid polypeptide reads, in one-letter code: Small ribosomal subunit protein uS19 (93 aa).

Belongs to the universal ribosomal protein uS19 family.

Functionally, protein S19 forms a complex with S13 that binds strongly to the 16S ribosomal RNA. The chain is Small ribosomal subunit protein uS19 from Geobacter metallireducens (strain ATCC 53774 / DSM 7210 / GS-15).